A 520-amino-acid polypeptide reads, in one-letter code: Putative hydrolase Mb2247c (520 aa).

An N-terminal signal peptide occupies residues 1 to 34; the sequence is MAAMWRRRPLSSALLSFGLLLGGLPLAAPPLAGA. The helical transmembrane segment at 104–124 threads the bilayer; sequence FGALLVNPGGPGASAVDMVAA. The AB hydrolase-1 domain occupies 105 to 403; the sequence is GALLVNPGGP…APTPADPAAW (299 aa). S232 (nucleophile) is an active-site residue. The active site involves D461. H488 functions as the Proton donor in the catalytic mechanism.

This sequence belongs to the peptidase S33 family.

Its subcellular location is the cell membrane. This Mycobacterium bovis (strain ATCC BAA-935 / AF2122/97) protein is Putative hydrolase Mb2247c.